Reading from the N-terminus, the 458-residue chain is Bifunctional protein GlmU (458 aa).

The interval Met1–Lys230 is pyrophosphorylase. Residues Leu9–Gly12, Lys23, Gln75, and Gly80–Thr81 each bind UDP-N-acetyl-alpha-D-glucosamine. Residue Asp104 coordinates Mg(2+). Residues Gly139, Glu155, Asn170, and Asn228 each coordinate UDP-N-acetyl-alpha-D-glucosamine. Position 228 (Asn228) interacts with Mg(2+). Residues Ile231–Gln251 form a linker region. The interval Gly252–Asp458 is N-acetyltransferase. UDP-N-acetyl-alpha-D-glucosamine-binding residues include Arg334 and Lys352. His364 (proton acceptor) is an active-site residue. Tyr367 and Asn378 together coordinate UDP-N-acetyl-alpha-D-glucosamine. Residues Ala381, Asn387–Tyr388, Ser406, Ala424, and Arg441 each bind acetyl-CoA.

The protein in the N-terminal section; belongs to the N-acetylglucosamine-1-phosphate uridyltransferase family. It in the C-terminal section; belongs to the transferase hexapeptide repeat family. Homotrimer. Mg(2+) serves as cofactor.

It localises to the cytoplasm. It catalyses the reaction alpha-D-glucosamine 1-phosphate + acetyl-CoA = N-acetyl-alpha-D-glucosamine 1-phosphate + CoA + H(+). The enzyme catalyses N-acetyl-alpha-D-glucosamine 1-phosphate + UTP + H(+) = UDP-N-acetyl-alpha-D-glucosamine + diphosphate. It participates in nucleotide-sugar biosynthesis; UDP-N-acetyl-alpha-D-glucosamine biosynthesis; N-acetyl-alpha-D-glucosamine 1-phosphate from alpha-D-glucosamine 6-phosphate (route II): step 2/2. Its pathway is nucleotide-sugar biosynthesis; UDP-N-acetyl-alpha-D-glucosamine biosynthesis; UDP-N-acetyl-alpha-D-glucosamine from N-acetyl-alpha-D-glucosamine 1-phosphate: step 1/1. The protein operates within bacterial outer membrane biogenesis; LPS lipid A biosynthesis. Its function is as follows. Catalyzes the last two sequential reactions in the de novo biosynthetic pathway for UDP-N-acetylglucosamine (UDP-GlcNAc). The C-terminal domain catalyzes the transfer of acetyl group from acetyl coenzyme A to glucosamine-1-phosphate (GlcN-1-P) to produce N-acetylglucosamine-1-phosphate (GlcNAc-1-P), which is converted into UDP-GlcNAc by the transfer of uridine 5-monophosphate (from uridine 5-triphosphate), a reaction catalyzed by the N-terminal domain. The chain is Bifunctional protein GlmU from Nitrosomonas eutropha (strain DSM 101675 / C91 / Nm57).